Reading from the N-terminus, the 274-residue chain is NH(3)-dependent NAD(+) synthetase (274 aa).

Residue 46–53 (GISGGQDS) coordinates ATP. Asp52 contacts Mg(2+). Arg140 contributes to the deamido-NAD(+) binding site. Thr160 contacts ATP. Mg(2+) is bound at residue Glu165. The deamido-NAD(+) site is built by Lys173 and Asp180. Residues Lys189 and Thr211 each coordinate ATP. 260–261 (HK) is a deamido-NAD(+) binding site.

Belongs to the NAD synthetase family. Homodimer.

The catalysed reaction is deamido-NAD(+) + NH4(+) + ATP = AMP + diphosphate + NAD(+) + H(+). It functions in the pathway cofactor biosynthesis; NAD(+) biosynthesis; NAD(+) from deamido-NAD(+) (ammonia route): step 1/1. In terms of biological role, catalyzes the ATP-dependent amidation of deamido-NAD to form NAD. Uses ammonia as a nitrogen source. In Streptococcus uberis (strain ATCC BAA-854 / 0140J), this protein is NH(3)-dependent NAD(+) synthetase.